A 252-amino-acid polypeptide reads, in one-letter code: C-type lectin domain family 2 member D3 (252 aa).

Residues 1-58 form a disordered region; the sequence is MSSSAHLQDAPPLLSGTLTQNEGQTSLRQSSSCGPSAASASESLSGYTESRIPHSKVR. Topologically, residues 1 to 78 are cytoplasmic; it reads MSSSAHLQDA…ESRVKRYCCY (78 aa). The segment covering 16-29 has biased composition (polar residues); that stretch reads GTLTQNEGQTSLRQ. Residues 30 to 43 show a composition bias toward low complexity; that stretch reads SSSCGPSAASASES. Residues 79-99 traverse the membrane as a helical; Signal-anchor for type II membrane protein segment; the sequence is GGVITVVAIAIVVPLSVTLSV. Over 100-252 the chain is Extracellular; that stretch reads KQMEQTSINN…KPKKYISQSQ (153 aa). The C-type lectin domain occupies 137 to 242; the sequence is YGNKCFYFSE…VYVERPWICS (106 aa). N-linked (GlcNAc...) asparagine glycosylation is present at Asn-150. The cysteines at positions 158 and 241 are disulfide-linked.

The protein resides in the cell membrane. Its function is as follows. Lectin-type cell surface receptor. This Rattus norvegicus (Rat) protein is C-type lectin domain family 2 member D3 (Clec2d3).